The primary structure comprises 157 residues: Small ribosomal subunit protein uS7 (157 aa).

The protein belongs to the universal ribosomal protein uS7 family. As to quaternary structure, part of the 30S ribosomal subunit. Contacts proteins S9 and S11.

Functionally, one of the primary rRNA binding proteins, it binds directly to 16S rRNA where it nucleates assembly of the head domain of the 30S subunit. Is located at the subunit interface close to the decoding center, probably blocks exit of the E-site tRNA. This is Small ribosomal subunit protein uS7 from Verminephrobacter eiseniae (strain EF01-2).